Here is a 172-residue protein sequence, read N- to C-terminus: Putative RNA polymerase II transcriptional coactivator (172 aa).

Disordered stretches follow at residues 1-43 (MPPK…QDGN) and 123-172 (QTDA…DDDE). The segment covering 24 to 43 (GNTGKAQPQELTKGSDQDGN) has biased composition (polar residues). Over residues 131–144 (PKVKALESNKESIK) the composition is skewed to basic and acidic residues. Acidic residues predominate over residues 158-172 (TSDEEEAAEDEDDDE).

This sequence belongs to the transcriptional coactivator PC4 family.

The protein resides in the nucleus. In terms of biological role, general coactivator that functions cooperatively with TAFs and mediates functional interactions between upstream activators and the general transcriptional machinery. Binds single-stranded DNA. In Neurospora crassa (strain ATCC 24698 / 74-OR23-1A / CBS 708.71 / DSM 1257 / FGSC 987), this protein is Putative RNA polymerase II transcriptional coactivator.